Consider the following 675-residue polypeptide: Heat shock 70 kDa protein 12A (675 aa).

A disordered region spans residues 1–45 (MADKEAGGGDAGPRETAPTSTYSSPARSLGDTGITPLSPSHILND). N-acetylalanine is present on alanine 2. The segment covering 17-26 (APTSTYSSPA) has biased composition (polar residues).

The protein belongs to the heat shock protein 70 family. As to quaternary structure, interacts with SORL1 (via cytosolic C-terminus); this interaction affects SORL1 internalization and subcellular localization. In terms of tissue distribution, expressed most strongly in brain, kidney and heart with little or no expression in other tissues. In the brain, expressed in glial cells, including astrocytes (at protein level). In the aorta, preferentially expressed in lesions.

It localises to the cytoplasm. It is found in the nucleus. Functionally, adapter protein for SORL1, but not SORT1. Delays SORL1 internalization and affects SORL1 subcellular localization. This chain is Heat shock 70 kDa protein 12A (Hspa12a), found in Mus musculus (Mouse).